We begin with the raw amino-acid sequence, 246 residues long: uncharacterized protein (246 aa).

The next 6 helical transmembrane spans lie at 7–27 (KVTLVSLILMAVFQFFMALII), 50–70 (LNILLQALTIVIAATIVSMEF), 99–119 (VSFYLYLAYYILALLFGLLFF), 135–155 (LALIGSNWLEAVMMGLFGLLC), 163–183 (AVAVVVSFVVLYGASTLVQLM), and 219–239 (FSIGILIIHAIFFIVVGWWCF).

It is found in the cell membrane. This is an uncharacterized protein from Bacillus subtilis (strain 168).